The sequence spans 357 residues: Dynein axonemal assembly factor 10 (357 aa).

WD repeat units lie at residues 63–105 (EKAK…VPVY), 115–154 (NTIDGVGGLGIGEGAPEIVTGSRDGTVKVWDPRQKDDPVA), 162–205 (ENKR…LRWE), 207–249 (NIKN…PTKG), 257–297 (AHKS…QRSK), and 319–357 (LSTQPVSSLDWSPDKRGLCICSSFDQMVRVLIVTKLHKI).

In terms of assembly, component of the PAQosome complex which is responsible for the biogenesis of several protein complexes and which consists of R2TP complex members RUVBL1, RUVBL2, RPAP3 and PIH1D1, URI complex members PFDN2, PFDN6, PDRG1, UXT and URI1 as well as ASDURF, POLR2E and DNAAF10/WDR92. Interacts with PIH1D1; the interaction associates DNAAF10 with the R2TP complex. Interacts with several dynein axonemal assembly factors.

The protein resides in the dynein axonemal particle. In terms of biological role, key assembly factor specifically required for the stability of axonemal dynein heavy chains in cytoplasm. This chain is Dynein axonemal assembly factor 10 (DNAAF10), found in Bos taurus (Bovine).